A 428-amino-acid chain; its full sequence is Adenylosuccinate synthetase, chloroplastic (428 aa).

Residues 17–23 and 45–47 contribute to the GTP site; these read GDEGKGK and GHT. The active-site Proton acceptor is the aspartate 18. Residues aspartate 18 and glycine 45 each coordinate Mg(2+). Residues 18–21, 43–46, threonine 135, arginine 149, asparagine 226, threonine 241, and arginine 305 contribute to the IMP site; these read DEGK and NAGH. Histidine 46 (proton donor) is an active-site residue. 301-307 contacts substrate; it reads TTTGRPR. GTP is bound by residues arginine 307, 333-335, and 416-418; these read KLD and GVG.

The protein belongs to the adenylosuccinate synthetase family. Homodimer. Requires Mg(2+) as cofactor.

It is found in the plastid. The protein localises to the chloroplast. It carries out the reaction IMP + L-aspartate + GTP = N(6)-(1,2-dicarboxyethyl)-AMP + GDP + phosphate + 2 H(+). Its pathway is purine metabolism; AMP biosynthesis via de novo pathway; AMP from IMP: step 1/2. Plays an important role in the de novo pathway and in the salvage pathway of purine nucleotide biosynthesis. Catalyzes the first committed step in the biosynthesis of AMP from IMP. The sequence is that of Adenylosuccinate synthetase, chloroplastic from Ostreococcus lucimarinus (strain CCE9901).